Consider the following 189-residue polypeptide: Elongation factor P (189 aa).

The protein belongs to the elongation factor P family.

It is found in the cytoplasm. The protein operates within protein biosynthesis; polypeptide chain elongation. Involved in peptide bond synthesis. Stimulates efficient translation and peptide-bond synthesis on native or reconstituted 70S ribosomes in vitro. Probably functions indirectly by altering the affinity of the ribosome for aminoacyl-tRNA, thus increasing their reactivity as acceptors for peptidyl transferase. The chain is Elongation factor P from Phytoplasma australiense.